The chain runs to 144 residues: Gonadotropin subunit beta-2 (144 aa).

A signal peptide spans 1–27 (MGTPVKILVVRNHILFSVVVLLAVAQS). Cystine bridges form between Cys33-Cys81, Cys47-Cys96, Cys50-Cys134, Cys58-Cys112, Cys62-Cys114, and Cys117-Cys124. Asn37 is a glycosylation site (N-linked (GlcNAc...) asparagine). The propeptide occupies 143–144 (VY).

The protein belongs to the glycoprotein hormones subunit beta family. Heterodimer of an alpha and a beta chain.

It is found in the secreted. In terms of biological role, involved in gametogenesis and steroidogenesis. This chain is Gonadotropin subunit beta-2 (cgbb), found in Cyprinus carpio (Common carp).